Reading from the N-terminus, the 80-residue chain is MKQGIHPEYRKVVFMDSTTEFKFITGSTRYSNETITMEDGNEYPLIRVDVSSDSHPFYTGRQKFASADGRIERFNKKYQR.

It belongs to the bacterial ribosomal protein bL31 family. Type B subfamily. In terms of assembly, part of the 50S ribosomal subunit.

This Exiguobacterium sp. (strain ATCC BAA-1283 / AT1b) protein is Large ribosomal subunit protein bL31B.